A 597-amino-acid polypeptide reads, in one-letter code: Arginine--tRNA ligase (597 aa).

Positions 138–148 (ANPTGPMHVGH) match the 'HIGH' region motif.

This sequence belongs to the class-I aminoacyl-tRNA synthetase family. In terms of assembly, monomer.

The protein localises to the cytoplasm. It carries out the reaction tRNA(Arg) + L-arginine + ATP = L-arginyl-tRNA(Arg) + AMP + diphosphate. The chain is Arginine--tRNA ligase from Rhodopseudomonas palustris (strain HaA2).